We begin with the raw amino-acid sequence, 405 residues long: Argininosuccinate synthase (405 aa).

Residues 10–18 (AYSGGLDTS) and Ala-37 each bind ATP. L-citrulline-binding residues include Tyr-88 and Ser-93. Gly-118 contributes to the ATP binding site. L-aspartate contacts are provided by Thr-120, Asn-124, and Asp-125. Residue Asn-124 coordinates L-citrulline. The L-citrulline site is built by Arg-128, Ser-177, Ser-186, Glu-263, and Tyr-275.

It belongs to the argininosuccinate synthase family. Type 1 subfamily. In terms of assembly, homotetramer.

It is found in the cytoplasm. It catalyses the reaction L-citrulline + L-aspartate + ATP = 2-(N(omega)-L-arginino)succinate + AMP + diphosphate + H(+). The protein operates within amino-acid biosynthesis; L-arginine biosynthesis; L-arginine from L-ornithine and carbamoyl phosphate: step 2/3. This is Argininosuccinate synthase from Acetivibrio thermocellus (strain ATCC 27405 / DSM 1237 / JCM 9322 / NBRC 103400 / NCIMB 10682 / NRRL B-4536 / VPI 7372) (Clostridium thermocellum).